A 225-amino-acid polypeptide reads, in one-letter code: tRNA (guanine-N(7)-)-methyltransferase (225 aa).

Glu-56, Glu-81, Asp-108, and Asp-131 together coordinate S-adenosyl-L-methionine. Asp-131 is an active-site residue. Substrate contacts are provided by residues Lys-135, Asp-167, and 204 to 207 (TKFE).

Belongs to the class I-like SAM-binding methyltransferase superfamily. TrmB family.

The enzyme catalyses guanosine(46) in tRNA + S-adenosyl-L-methionine = N(7)-methylguanosine(46) in tRNA + S-adenosyl-L-homocysteine. It functions in the pathway tRNA modification; N(7)-methylguanine-tRNA biosynthesis. In terms of biological role, catalyzes the formation of N(7)-methylguanine at position 46 (m7G46) in tRNA. The sequence is that of tRNA (guanine-N(7)-)-methyltransferase from Legionella pneumophila (strain Lens).